We begin with the raw amino-acid sequence, 372 residues long: Monocyte differentiation antigen CD14 (372 aa).

An N-terminal signal peptide occupies residues Met-1 to Ala-17. Intrachain disulfides connect Cys-25–Cys-36 and Cys-34–Cys-51. A glycan (N-linked (GlcNAc...) asparagine) is linked at Asn-37. 11 LRR repeats span residues Ala-54–Tyr-82, Ala-83–Leu-118, Lys-119–Leu-145, Ser-146–Leu-173, Gln-174–Leu-197, Thr-198–Leu-225, Gln-226–Pro-252, His-253–Leu-275, Asn-276–Leu-296, Asn-297–Val-318, and Val-319–Phe-346. Asn-152 carries an N-linked (GlcNAc...) asparagine glycan. 2 disulfide bridges follow: Cys-188-Cys-218 and Cys-242-Cys-269. N-linked (GlcNAc...) asparagine glycosylation occurs at Asn-279. Positions Gln-287–Ile-372 are required for response to bacterial lipopolysaccharide (LPS). A glycan (N-linked (GlcNAc...) asparagine) is linked at Asn-320. Asn-342 carries GPI-anchor amidated asparagine lipidation. A propeptide spans Ser-343–Ile-372 (removed in mature form).

In terms of assembly, belongs to the lipopolysaccharide (LPS) receptor, a multi-protein complex containing at least CD14, LY96 and TLR4. Interacts with LPS-bound LPB. Interacts with LPAR1. Interacts with the TLR2:TLR6 or TLR2:TLR1 heterodimers; upon interaction with ligands such as diacylated lipopeptides and triacylated lipopeptides, respectively. Interacts with MYO18A. Interacts with FSTL1.

It is found in the cell membrane. Its subcellular location is the secreted. The protein resides in the membrane raft. It localises to the golgi apparatus. Coreceptor for bacterial lipopolysaccharide. In concert with LBP, binds to monomeric lipopolysaccharide and delivers it to the LY96/TLR4 complex, thereby mediating the innate immune response to bacterial lipopolysaccharide (LPS). Acts via MyD88, TIRAP and TRAF6, leading to NF-kappa-B activation, cytokine secretion and the inflammatory response. Acts as a coreceptor for TLR2:TLR6 heterodimer in response to diacylated lipopeptides and for TLR2:TLR1 heterodimer in response to triacylated lipopeptides, these clusters trigger signaling from the cell surface and subsequently are targeted to the Golgi in a lipid-raft dependent pathway. Binds electronegative LDL (LDL(-)) and mediates the cytokine release induced by LDL(-). This chain is Monocyte differentiation antigen CD14 (CD14), found in Oryctolagus cuniculus (Rabbit).